Consider the following 109-residue polypeptide: Class I hydrophobin dewE (109 aa).

The N-terminal stretch at 1–20 is a signal peptide; the sequence is MKVATALSVLAVAGSALASA. 4 disulfides stabilise this stretch: Cys34/Cys87, Cys40/Cys81, Cys41/Cys74, and Cys88/Cys102.

It belongs to the fungal hydrophobin family. Self-assembles to form functional amyloid fibrils called rodlets. Self-assembly into fibrillar rodlets occurs spontaneously at hydrophobic:hydrophilic interfaces and the rodlets further associate laterally to form amphipathic monolayers.

The protein localises to the secreted. It is found in the spore wall. Its function is as follows. Aerial growth, conidiation, and dispersal of filamentous fungi in the environment rely upon a capability of their secreting small amphipathic proteins called hydrophobins (HPBs) with low sequence identity. Class I can self-assemble into an outermost layer of rodlet bundles on aerial cell surfaces, conferring cellular hydrophobicity that supports fungal growth, development and dispersal; whereas Class II form highly ordered films at water-air interfaces through intermolecular interactions but contribute nothing to the rodlet structure. DewE is a class I hydrophobin that contributes to the hydrophobicity of the spore surface. The sequence is that of Class I hydrophobin dewE from Emericella nidulans (strain FGSC A4 / ATCC 38163 / CBS 112.46 / NRRL 194 / M139) (Aspergillus nidulans).